A 375-amino-acid chain; its full sequence is 23S rRNA (uracil(747)-C(5))-methyltransferase RlmC (375 aa).

[4Fe-4S] cluster is bound by residues Cys3, Cys11, Cys14, and Cys87. 4 residues coordinate S-adenosyl-L-methionine: Gln212, Phe241, Glu262, and Asn307. Residue Cys334 is the Nucleophile of the active site.

This sequence belongs to the class I-like SAM-binding methyltransferase superfamily. RNA M5U methyltransferase family. RlmC subfamily.

The catalysed reaction is uridine(747) in 23S rRNA + S-adenosyl-L-methionine = 5-methyluridine(747) in 23S rRNA + S-adenosyl-L-homocysteine + H(+). Its function is as follows. Catalyzes the formation of 5-methyl-uridine at position 747 (m5U747) in 23S rRNA. This is 23S rRNA (uracil(747)-C(5))-methyltransferase RlmC from Salmonella paratyphi A (strain ATCC 9150 / SARB42).